Consider the following 515-residue polypeptide: GMP synthase [glutamine-hydrolyzing] (515 aa).

One can recognise a Glutamine amidotransferase type-1 domain in the interval 6-198 (KVIIIDYGSQ…LFHVAKLKAD (193 aa)). The active-site Nucleophile is C83. Catalysis depends on residues H172 and E174. In terms of domain architecture, GMPS ATP-PPase spans 199–390 (WTMSSFVERA…LGLPDFIIWR (192 aa)). Position 226-232 (226-232 (SGGIDST)) interacts with ATP.

As to quaternary structure, homodimer.

It carries out the reaction XMP + L-glutamine + ATP + H2O = GMP + L-glutamate + AMP + diphosphate + 2 H(+). Its pathway is purine metabolism; GMP biosynthesis; GMP from XMP (L-Gln route): step 1/1. Its function is as follows. Catalyzes the synthesis of GMP from XMP. This Nitratidesulfovibrio vulgaris (strain DP4) (Desulfovibrio vulgaris) protein is GMP synthase [glutamine-hydrolyzing].